Reading from the N-terminus, the 459-residue chain is Protein phosphatase 1M (459 aa).

Residues 1 to 10 (MSAGWFRRRF) show a composition bias toward basic residues. The disordered stretch occupies residues 1–64 (MSAGWFRRRF…SRPVRSPARG (64 aa)). The segment covering 14-27 (EPLPAPRPPGPHAS) has biased composition (pro residues). The segment covering 38–48 (RGSSSSPGAAD) has biased composition (low complexity). 2 residues coordinate Mn(2+): Asp125 and Gly126. The region spanning 162–459 (MHLNGRCICP…HSQGQESSDH (298 aa)) is the PPM-type phosphatase domain.

Belongs to the PP2C family. Mg(2+) is required as a cofactor. The cofactor is Mn(2+).

Its subcellular location is the nucleus. The enzyme catalyses O-phospho-L-seryl-[protein] + H2O = L-seryl-[protein] + phosphate. It carries out the reaction O-phospho-L-threonyl-[protein] + H2O = L-threonyl-[protein] + phosphate. The polypeptide is Protein phosphatase 1M (PPM1M) (Homo sapiens (Human)).